Here is a 619-residue protein sequence, read N- to C-terminus: Dihydroxy-acid dehydratase (619 aa).

Asp-81 serves as a coordination point for Mg(2+). Position 122 (Cys-122) interacts with [2Fe-2S] cluster. 2 residues coordinate Mg(2+): Asp-123 and Lys-124. Lys-124 carries the post-translational modification N6-carboxylysine. Residue Cys-198 coordinates [2Fe-2S] cluster. Residue Glu-494 participates in Mg(2+) binding. Residue Ser-520 is the Proton acceptor of the active site.

Belongs to the IlvD/Edd family. Homodimer. [2Fe-2S] cluster serves as cofactor. Mg(2+) is required as a cofactor.

The catalysed reaction is (2R)-2,3-dihydroxy-3-methylbutanoate = 3-methyl-2-oxobutanoate + H2O. It carries out the reaction (2R,3R)-2,3-dihydroxy-3-methylpentanoate = (S)-3-methyl-2-oxopentanoate + H2O. It functions in the pathway amino-acid biosynthesis; L-isoleucine biosynthesis; L-isoleucine from 2-oxobutanoate: step 3/4. It participates in amino-acid biosynthesis; L-valine biosynthesis; L-valine from pyruvate: step 3/4. Functionally, functions in the biosynthesis of branched-chain amino acids. Catalyzes the dehydration of (2R,3R)-2,3-dihydroxy-3-methylpentanoate (2,3-dihydroxy-3-methylvalerate) into 2-oxo-3-methylpentanoate (2-oxo-3-methylvalerate) and of (2R)-2,3-dihydroxy-3-methylbutanoate (2,3-dihydroxyisovalerate) into 2-oxo-3-methylbutanoate (2-oxoisovalerate), the penultimate precursor to L-isoleucine and L-valine, respectively. The polypeptide is Dihydroxy-acid dehydratase (Neisseria meningitidis serogroup C / serotype 2a (strain ATCC 700532 / DSM 15464 / FAM18)).